Here is a 465-residue protein sequence, read N- to C-terminus: UDP-N-acetylmuramate--L-alanine ligase (465 aa).

112–118 (GTHGKTT) serves as a coordination point for ATP.

It belongs to the MurCDEF family.

The protein localises to the cytoplasm. The catalysed reaction is UDP-N-acetyl-alpha-D-muramate + L-alanine + ATP = UDP-N-acetyl-alpha-D-muramoyl-L-alanine + ADP + phosphate + H(+). The protein operates within cell wall biogenesis; peptidoglycan biosynthesis. Functionally, cell wall formation. This is UDP-N-acetylmuramate--L-alanine ligase from Burkholderia thailandensis (strain ATCC 700388 / DSM 13276 / CCUG 48851 / CIP 106301 / E264).